Consider the following 358-residue polypeptide: Nicotinate-nucleotide--dimethylbenzimidazole phosphoribosyltransferase (358 aa).

Glu-313 serves as the catalytic Proton acceptor.

Belongs to the CobT family.

It carries out the reaction 5,6-dimethylbenzimidazole + nicotinate beta-D-ribonucleotide = alpha-ribazole 5'-phosphate + nicotinate + H(+). The protein operates within nucleoside biosynthesis; alpha-ribazole biosynthesis; alpha-ribazole from 5,6-dimethylbenzimidazole: step 1/2. Its function is as follows. Catalyzes the synthesis of alpha-ribazole-5'-phosphate from nicotinate mononucleotide (NAMN) and 5,6-dimethylbenzimidazole (DMB). This is Nicotinate-nucleotide--dimethylbenzimidazole phosphoribosyltransferase from Corynebacterium glutamicum (strain ATCC 13032 / DSM 20300 / JCM 1318 / BCRC 11384 / CCUG 27702 / LMG 3730 / NBRC 12168 / NCIMB 10025 / NRRL B-2784 / 534).